We begin with the raw amino-acid sequence, 163 residues long: Phosphopantetheine adenylyltransferase (163 aa).

Ser-10 and His-18 together coordinate ATP. Ser-10 serves as a coordination point for substrate. Substrate-binding residues include Lys-42, Thr-75, and Arg-89. Residues 90 to 92 (GIR), Glu-100, and 125 to 131 (YAHVSSS) contribute to the ATP site.

Belongs to the bacterial CoaD family. Homohexamer. Mg(2+) serves as cofactor.

It localises to the cytoplasm. It catalyses the reaction (R)-4'-phosphopantetheine + ATP + H(+) = 3'-dephospho-CoA + diphosphate. It participates in cofactor biosynthesis; coenzyme A biosynthesis; CoA from (R)-pantothenate: step 4/5. In terms of biological role, reversibly transfers an adenylyl group from ATP to 4'-phosphopantetheine, yielding dephospho-CoA (dPCoA) and pyrophosphate. The sequence is that of Phosphopantetheine adenylyltransferase from Enterococcus faecalis (strain ATCC 700802 / V583).